Consider the following 321-residue polypeptide: Putative ribose-phosphate pyrophosphokinase 2 (321 aa).

ATP-binding positions include 43–45 and 102–103; these read DGE and RQ. His-136 and Asp-176 together coordinate Mg(2+). Position 225 (Asp-225) interacts with D-ribose 5-phosphate.

The protein belongs to the ribose-phosphate pyrophosphokinase family. Class I subfamily. As to quaternary structure, homohexamer. The cofactor is Mg(2+).

It localises to the cytoplasm. The catalysed reaction is D-ribose 5-phosphate + ATP = 5-phospho-alpha-D-ribose 1-diphosphate + AMP + H(+). It participates in metabolic intermediate biosynthesis; 5-phospho-alpha-D-ribose 1-diphosphate biosynthesis; 5-phospho-alpha-D-ribose 1-diphosphate from D-ribose 5-phosphate (route I): step 1/1. Functionally, involved in the biosynthesis of the central metabolite phospho-alpha-D-ribosyl-1-pyrophosphate (PRPP) via the transfer of pyrophosphoryl group from ATP to 1-hydroxyl of ribose-5-phosphate (Rib-5-P). The sequence is that of Putative ribose-phosphate pyrophosphokinase 2 from Lactiplantibacillus plantarum (strain ATCC BAA-793 / NCIMB 8826 / WCFS1) (Lactobacillus plantarum).